The chain runs to 118 residues: Basic phospholipase A2 PA-13 (118 aa).

Intrachain disulfides connect C11–C71, C27–C117, C29–C45, C44–C98, C51–C91, C60–C84, and C78–C89. Residues Y28, G30, and G32 each coordinate Ca(2+). The active site involves H48. D49 serves as a coordination point for Ca(2+). D92 is an active-site residue.

Belongs to the phospholipase A2 family. Group I subfamily. D49 sub-subfamily. It depends on Ca(2+) as a cofactor. In terms of tissue distribution, expressed by the venom gland.

The protein localises to the secreted. It carries out the reaction a 1,2-diacyl-sn-glycero-3-phosphocholine + H2O = a 1-acyl-sn-glycero-3-phosphocholine + a fatty acid + H(+). PLA2 catalyzes the calcium-dependent hydrolysis of the 2-acyl groups in 3-sn-phosphoglycerides. The sequence is that of Basic phospholipase A2 PA-13 from Pseudechis australis (Mulga snake).